The following is a 303-amino-acid chain: Porphobilinogen deaminase (303 aa).

Residue cysteine 241 is modified to S-(dipyrrolylmethanemethyl)cysteine.

The protein belongs to the HMBS family. Monomer. It depends on dipyrromethane as a cofactor.

The catalysed reaction is 4 porphobilinogen + H2O = hydroxymethylbilane + 4 NH4(+). The protein operates within porphyrin-containing compound metabolism; protoporphyrin-IX biosynthesis; coproporphyrinogen-III from 5-aminolevulinate: step 2/4. It functions in the pathway porphyrin-containing compound metabolism; chlorophyll biosynthesis. Tetrapolymerization of the monopyrrole PBG into the hydroxymethylbilane pre-uroporphyrinogen in several discrete steps. The polypeptide is Porphobilinogen deaminase (Roseiflexus sp. (strain RS-1)).